Here is a 70-residue protein sequence, read N- to C-terminus: ATP synthase subunit c (70 aa).

Helical transmembrane passes span 4 to 24 and 47 to 67; these read IAAG…NGLV and FLGV…AFLV.

Belongs to the ATPase C chain family. As to quaternary structure, F-type ATPases have 2 components, F(1) - the catalytic core - and F(0) - the membrane proton channel. F(1) has five subunits: alpha(3), beta(3), gamma(1), delta(1), epsilon(1). F(0) has three main subunits: a(1), b(2) and c(10-14). The alpha and beta chains form an alternating ring which encloses part of the gamma chain. F(1) is attached to F(0) by a central stalk formed by the gamma and epsilon chains, while a peripheral stalk is formed by the delta and b chains.

The protein resides in the cell membrane. F(1)F(0) ATP synthase produces ATP from ADP in the presence of a proton or sodium gradient. F-type ATPases consist of two structural domains, F(1) containing the extramembraneous catalytic core and F(0) containing the membrane proton channel, linked together by a central stalk and a peripheral stalk. During catalysis, ATP synthesis in the catalytic domain of F(1) is coupled via a rotary mechanism of the central stalk subunits to proton translocation. In terms of biological role, key component of the F(0) channel; it plays a direct role in translocation across the membrane. A homomeric c-ring of between 10-14 subunits forms the central stalk rotor element with the F(1) delta and epsilon subunits. The protein is ATP synthase subunit c of Limosilactobacillus fermentum (strain NBRC 3956 / LMG 18251) (Lactobacillus fermentum).